Here is a 239-residue protein sequence, read N- to C-terminus: Aspartate/glutamate leucyltransferase (239 aa).

This sequence belongs to the R-transferase family. Bpt subfamily.

It localises to the cytoplasm. The catalysed reaction is N-terminal L-glutamyl-[protein] + L-leucyl-tRNA(Leu) = N-terminal L-leucyl-L-glutamyl-[protein] + tRNA(Leu) + H(+). The enzyme catalyses N-terminal L-aspartyl-[protein] + L-leucyl-tRNA(Leu) = N-terminal L-leucyl-L-aspartyl-[protein] + tRNA(Leu) + H(+). Functionally, functions in the N-end rule pathway of protein degradation where it conjugates Leu from its aminoacyl-tRNA to the N-termini of proteins containing an N-terminal aspartate or glutamate. This Alkalilimnicola ehrlichii (strain ATCC BAA-1101 / DSM 17681 / MLHE-1) protein is Aspartate/glutamate leucyltransferase.